We begin with the raw amino-acid sequence, 75 residues long: Kappa-conotoxin RIIIK (75 aa).

A signal peptide spans M1–A19. The propeptide occupies L20–R50. Residues P52, P63, P65, and P71 each carry the 4-hydroxyproline modification. 3 disulfides stabilise this stretch: C54/C67, C55/C72, and C62/C73. Threonine amide is present on T74.

This sequence belongs to the conotoxin M superfamily. Expressed by the venom duct.

It localises to the secreted. Kappa-conotoxins inhibits voltage-gated potassium channels (Kv). This synthetic toxin reversibly inhibits the insect potassium channel Shaker K+, the teleost homolog TSha1 and the mammalian Kv1.2/KCNA2 channel. Interacts with the pore region of the insect channel, in a state-dependent manner. Causes seizure when intracerebrovascularly injected into mice. Is also toxic when intrathecally injected into mice, but shows no visible effects by intraperitoneal injection. Shows protective effects on cardiac tissue when administered after an ischemic event. The sequence is that of Kappa-conotoxin RIIIK from Conus radiatus (Rayed cone).